The sequence spans 81 residues: Cytochrome b559 subunit alpha (81 aa).

The chain crosses the membrane as a helical span at residues 21 to 35; the sequence is VIHSVTIPSLFVGGW. Position 23 (H23) interacts with heme.

It belongs to the PsbE/PsbF family. As to quaternary structure, heterodimer of an alpha subunit and a beta subunit. PSII is composed of 1 copy each of membrane proteins PsbA, PsbB, PsbC, PsbD, PsbE, PsbF, PsbH, PsbI, PsbJ, PsbK, PsbL, PsbM, PsbT, PsbY, PsbZ, Psb30/Ycf12, at least 3 peripheral proteins of the oxygen-evolving complex and a large number of cofactors. It forms dimeric complexes. Heme b serves as cofactor.

The protein localises to the plastid. The protein resides in the chloroplast thylakoid membrane. Its function is as follows. This b-type cytochrome is tightly associated with the reaction center of photosystem II (PSII). PSII is a light-driven water:plastoquinone oxidoreductase that uses light energy to abstract electrons from H(2)O, generating O(2) and a proton gradient subsequently used for ATP formation. It consists of a core antenna complex that captures photons, and an electron transfer chain that converts photonic excitation into a charge separation. The chain is Cytochrome b559 subunit alpha from Euglena gracilis.